Reading from the N-terminus, the 446-residue chain is Ribulose bisphosphate carboxylase large chain (446 aa).

Substrate is bound by residues Asn-89 and Thr-139. The active-site Proton acceptor is Lys-141. Lys-143 contributes to the substrate binding site. Mg(2+)-binding residues include Lys-167, Asp-169, and Glu-170. Lys-167 carries the N6-carboxylysine modification. Catalysis depends on His-260, which acts as the Proton acceptor. Substrate-binding residues include Arg-261, His-293, and Ser-345.

The protein belongs to the RuBisCO large chain family. Type I subfamily. In terms of assembly, heterohexadecamer of 8 large chains and 8 small chains; disulfide-linked. The disulfide link is formed within the large subunit homodimers. The cofactor is Mg(2+). In terms of processing, the disulfide bond which can form in the large chain dimeric partners within the hexadecamer appears to be associated with oxidative stress and protein turnover.

Its subcellular location is the plastid. It is found in the chloroplast. It carries out the reaction 2 (2R)-3-phosphoglycerate + 2 H(+) = D-ribulose 1,5-bisphosphate + CO2 + H2O. The catalysed reaction is D-ribulose 1,5-bisphosphate + O2 = 2-phosphoglycolate + (2R)-3-phosphoglycerate + 2 H(+). RuBisCO catalyzes two reactions: the carboxylation of D-ribulose 1,5-bisphosphate, the primary event in carbon dioxide fixation, as well as the oxidative fragmentation of the pentose substrate in the photorespiration process. Both reactions occur simultaneously and in competition at the same active site. This is Ribulose bisphosphate carboxylase large chain from Exacum affine (Persian violet).